A 179-amino-acid chain; its full sequence is MNAIKTAVAAVTAAASLVAFSPAEAATATANLNVTANVGGACSIGSGAGGGTLNFGTYDPVVVNSALGVDLFGTGSLSVQCTLLSTAVITLGQGLYPAAGSTAAVPLRRMRNAASTDYLSYFLYMDVTRLIAWGNTSGTGLPFLGLGLPVPVQVYGTVPRGQNVPSGTYNDTVVATITF.

Positions Met-1–Ala-25 are cleaved as a signal peptide.

Its subcellular location is the secreted. It localises to the spore. The protein localises to the perispore. Functionally, a late-developmental spore coat protein. This Myxococcus xanthus protein is Protein U (pru).